Here is a 579-residue protein sequence, read N- to C-terminus: Arginine--tRNA ligase (579 aa).

Residues 123–133 (ANPTGPVHVGR) carry the 'HIGH' region motif.

This sequence belongs to the class-I aminoacyl-tRNA synthetase family.

The protein localises to the cytoplasm. The catalysed reaction is tRNA(Arg) + L-arginine + ATP = L-arginyl-tRNA(Arg) + AMP + diphosphate. The protein is Arginine--tRNA ligase of Haloarcula marismortui (strain ATCC 43049 / DSM 3752 / JCM 8966 / VKM B-1809) (Halobacterium marismortui).